The chain runs to 402 residues: CinA-like protein (402 aa).

This sequence belongs to the CinA family.

The sequence is that of CinA-like protein from Fusobacterium nucleatum subsp. nucleatum (strain ATCC 25586 / DSM 15643 / BCRC 10681 / CIP 101130 / JCM 8532 / KCTC 2640 / LMG 13131 / VPI 4355).